A 512-amino-acid polypeptide reads, in one-letter code: 2-isopropylmalate synthase (512 aa).

Residues 4 to 266 (IEIFDTTLRD…TTKLNLKEIA (263 aa)) form the Pyruvate carboxyltransferase domain. 4 residues coordinate Mn(2+): aspartate 13, histidine 201, histidine 203, and asparagine 237. The interval 390–512 (QLESVQLAYG…GEPTPVSATI (123 aa)) is regulatory domain.

The protein belongs to the alpha-IPM synthase/homocitrate synthase family. LeuA type 1 subfamily. In terms of assembly, homodimer. It depends on Mn(2+) as a cofactor.

The protein localises to the cytoplasm. The catalysed reaction is 3-methyl-2-oxobutanoate + acetyl-CoA + H2O = (2S)-2-isopropylmalate + CoA + H(+). It functions in the pathway amino-acid biosynthesis; L-leucine biosynthesis; L-leucine from 3-methyl-2-oxobutanoate: step 1/4. Catalyzes the condensation of the acetyl group of acetyl-CoA with 3-methyl-2-oxobutanoate (2-ketoisovalerate) to form 3-carboxy-3-hydroxy-4-methylpentanoate (2-isopropylmalate). The chain is 2-isopropylmalate synthase from Brevibacillus brevis (strain 47 / JCM 6285 / NBRC 100599).